Reading from the N-terminus, the 457-residue chain is Argininosuccinate lyase (457 aa).

This sequence belongs to the lyase 1 family. Argininosuccinate lyase subfamily.

It localises to the cytoplasm. It catalyses the reaction 2-(N(omega)-L-arginino)succinate = fumarate + L-arginine. It participates in amino-acid biosynthesis; L-arginine biosynthesis; L-arginine from L-ornithine and carbamoyl phosphate: step 3/3. This is Argininosuccinate lyase from Cronobacter sakazakii (strain ATCC BAA-894) (Enterobacter sakazakii).